The chain runs to 1119 residues: uncharacterized protein (1119 aa).

The first 21 residues, 1 to 21 (MNNIYISLYIFFISYIIQLCF), serve as a signal peptide directing secretion. Residues 170 to 206 (NKKKLDKEKKKNVIELKEYLEDLKKRMFDMQKRLNDI) are a coiled coil. Disordered regions lie at residues 606–627 (NNNT…IFNN) and 782–905 (ASVQ…EHDE). A compositionally biased stretch (basic and acidic residues) spans 788-891 (DKGEDNNDND…EKDKSRDDNK (104 aa)). A coiled-coil region spans residues 890-920 (NKAQNNNSTDNEEHDEITEQIGFLKNHNQKY).

This is an uncharacterized protein from Plasmodium falciparum (isolate 3D7).